Reading from the N-terminus, the 367-residue chain is Forkhead box protein I2-B (367 aa).

The segment covering 31-40 (QQQNQQLPQR) has biased composition (low complexity). The segment at 31 to 51 (QQQNQQLPQRPAAPPAPGYGL) is disordered. Positions 124–218 (RPPYSYSSLI…DNGNFRRKRK (95 aa)) form a DNA-binding region, fork-head. A disordered region spans residues 224–254 (VGAGFDEESNEDKKPLALKSLGPDSPGGASV).

Its subcellular location is the nucleus. Functionally, possible transcriptional activator. The polypeptide is Forkhead box protein I2-B (foxi2-b) (Xenopus laevis (African clawed frog)).